The primary structure comprises 186 residues: Transcription factor pgmR (186 aa).

The zn(2)-C6 fungal-type DNA-binding region spans 19 to 46 (CDECGAAKLKCDRGHPSCGRCISLGLKC). The tract at residues 52-98 (RKAGKPRRDAQSATRPPPTPGDSGPPLDYNSFGPTSPPSSVGDGATL) is disordered.

It localises to the nucleus. Functionally, transcription factor that specifically regulates the expression of the pgm gene cluster that mediates the biosynthesis of cryptic naphthoquinones derived pigments responsible for the coloration of the fruiting bodies. This Aspergillus terreus (strain NIH 2624 / FGSC A1156) protein is Transcription factor pgmR.